Consider the following 88-residue polypeptide: Small ribosomal subunit protein bS20 (88 aa).

Disordered regions lie at residues 1-23 and 69-88; these read MANSPQARKRARQAENRRQHNAA and PNKAARHKSRLNTKIKAMAA. Positions 69–81 are enriched in basic residues; that stretch reads PNKAARHKSRLNT.

Belongs to the bacterial ribosomal protein bS20 family.

In terms of biological role, binds directly to 16S ribosomal RNA. The protein is Small ribosomal subunit protein bS20 of Alcanivorax borkumensis (strain ATCC 700651 / DSM 11573 / NCIMB 13689 / SK2).